The primary structure comprises 108 residues: UPF0102 protein Sfri_0388 (108 aa).

The protein belongs to the UPF0102 family.

This chain is UPF0102 protein Sfri_0388, found in Shewanella frigidimarina (strain NCIMB 400).